Here is a 352-residue protein sequence, read N- to C-terminus: Ubiquitin thioesterase otulin (352 aa).

A disordered region spans residues 1 to 49 (MSRGTMPQPGAWPGASCAETPAREAGAAARDGGKVTAGAQPRAATRCPA). Residues 18 to 30 (AETPAREAGAAAR) show a composition bias toward low complexity. Positions 49 to 73 (AEHEEDMYRAADEIEKEKELLIHER) form a coiled coil. The PIM motif signature appears at 52–57 (EEDMYR). Tyr56 bears the Phosphotyrosine mark. 2 linear diubiquitin binding regions span residues 95–96 (EW) and 124–126 (RGD). Residues 118 to 346 (TSIRRVRGDN…DRHYNIPVRV (229 aa)) enclose the OTU domain. The active site involves Asp126. The active-site Nucleophile is the Cys129. 3 linear diubiquitin binding regions span residues 255-259 (FFSVL), 283-289 (TGGLEQV), and 336-338 (DDR). Residue His339 is part of the active site. The short motif at 349 to 352 (ETSV) is the PDZ-binding element.

Belongs to the peptidase C65 family. Otulin subfamily. Interacts (via the PUB domain) with RNF31 (via the PIM motif); the interaction is direct. Interacts with DVL2. Post-translationally, ubiquitinated. Acetylated. In terms of processing, phosphorylated. Phosphorylation at Tyr-56 prevents interaction with RNF31; dephosphorylation promotes interaction with RNF31 and the LUBAC complex.

It is found in the cytoplasm. The catalysed reaction is Thiol-dependent hydrolysis of ester, thioester, amide, peptide and isopeptide bonds formed by the C-terminal Gly of ubiquitin (a 76-residue protein attached to proteins as an intracellular targeting signal).. In terms of biological role, deubiquitinase that specifically removes linear ('Met-1'-linked) polyubiquitin chains to substrates and acts as a regulator of angiogenesis and innate immune response. Required during angiogenesis, craniofacial and neuronal development by regulating the canonical Wnt signaling together with the LUBAC complex. Acts as a negative regulator of NF-kappa-B by regulating the activity of the LUBAC complex. OTULIN function is mainly restricted to homeostasis of the LUBAC complex: acts by removing 'Met-1'-linked autoubiquitination of the LUBAC complex, thereby preventing inactivation of the LUBAC complex. Acts as a key negative regulator of inflammation by restricting spontaneous inflammation and maintaining immune homeostasis. In myeloid cell, required to prevent unwarranted secretion of cytokines leading to inflammation and autoimmunity by restricting linear polyubiquitin formation. Plays a role in innate immune response by restricting linear polyubiquitin formation on LUBAC complex in response to NOD2 stimulation, probably to limit NOD2-dependent pro-inflammatory signaling. The sequence is that of Ubiquitin thioesterase otulin from Mus musculus (Mouse).